Reading from the N-terminus, the 72-residue chain is Cytotoxin 9 (72 aa).

The signal sequence occupies residues 1–12 (VVTIVCLDLGYT). 4 disulfide bridges follow: Cys-15/Cys-33, Cys-26/Cys-50, Cys-54/Cys-65, and Cys-66/Cys-71.

The protein belongs to the three-finger toxin family. Short-chain subfamily. Type IA cytotoxin sub-subfamily. In terms of assembly, monomer in solution; Homodimer and oligomer in the presence of negatively charged lipids forming a pore with a size ranging between 20 and 30 Angstroms. Expressed by the venom gland.

It localises to the secreted. Its function is as follows. Shows cytolytic activity on many different cells by forming a pore in lipid membranes. In vivo, increases heart rate or kills the animal by cardiac arrest. In addition, it binds to heparin with high affinity, interacts with Kv channel-interacting protein 1 (KCNIP1) in a calcium-independent manner, and binds to integrin alpha-V/beta-3 (ITGAV/ITGB3) with moderate affinity. Preferentially binds acidic phospholipids like phosphatidylserine, phosphatidic acid and phosphatidyl glycerol. Has hemolytic activity towards human erythrocytes (EC(50)=0.171 uM) and cytolytic activity towards various cell lines. This chain is Cytotoxin 9, found in Naja naja (Indian cobra).